The primary structure comprises 334 residues: Ferredoxin--NADP reductase (334 aa).

The FAD site is built by Asp33, Gln41, Tyr46, Ala86, Phe120, Asp286, and Thr327.

Belongs to the ferredoxin--NADP reductase type 2 family. Homodimer. It depends on FAD as a cofactor.

It catalyses the reaction 2 reduced [2Fe-2S]-[ferredoxin] + NADP(+) + H(+) = 2 oxidized [2Fe-2S]-[ferredoxin] + NADPH. The polypeptide is Ferredoxin--NADP reductase (Rickettsia typhi (strain ATCC VR-144 / Wilmington)).